The following is a 630-amino-acid chain: tRNA uridine 5-carboxymethylaminomethyl modification enzyme MnmG (630 aa).

An FAD-binding site is contributed by 13–18 (GGGHAG). 273–287 (GPRYCPSIEDKIHRF) lines the NAD(+) pocket.

This sequence belongs to the MnmG family. In terms of assembly, homodimer. Heterotetramer of two MnmE and two MnmG subunits. Requires FAD as cofactor.

The protein localises to the cytoplasm. NAD-binding protein involved in the addition of a carboxymethylaminomethyl (cmnm) group at the wobble position (U34) of certain tRNAs, forming tRNA-cmnm(5)s(2)U34. This Pseudomonas putida (Arthrobacter siderocapsulatus) protein is tRNA uridine 5-carboxymethylaminomethyl modification enzyme MnmG.